A 280-amino-acid chain; its full sequence is Diaminopimelate epimerase (280 aa).

2 residues coordinate substrate: Asn-13 and Asn-66. The active-site Proton donor is Cys-75. Residues 76–77, Asn-165, Asn-198, and 216–217 each bind substrate; these read GN and ER. Cys-225 (proton acceptor) is an active-site residue. Residue 226–227 participates in substrate binding; the sequence is GT.

Belongs to the diaminopimelate epimerase family. In terms of assembly, homodimer.

The protein resides in the cytoplasm. The catalysed reaction is (2S,6S)-2,6-diaminopimelate = meso-2,6-diaminopimelate. Its pathway is amino-acid biosynthesis; L-lysine biosynthesis via DAP pathway; DL-2,6-diaminopimelate from LL-2,6-diaminopimelate: step 1/1. Its function is as follows. Catalyzes the stereoinversion of LL-2,6-diaminopimelate (L,L-DAP) to meso-diaminopimelate (meso-DAP), a precursor of L-lysine and an essential component of the bacterial peptidoglycan. In Cyanothece sp. (strain PCC 7425 / ATCC 29141), this protein is Diaminopimelate epimerase.